We begin with the raw amino-acid sequence, 2497 residues long: Polyprotein P1234 (2497 aa).

One can recognise an Alphavirus-like MT domain in the interval 28–259; the sequence is EAKQVTDNDH…EKRDLLRSWH (232 aa). Residues 244–263 form a nsP1 membrane-binding region; the sequence is GSTIYHEKRDLLRSWHLPSV. Cys-419 is lipidated: S-palmitoyl cysteine; by host. The 152-residue stretch at 690-841 folds into the (+)RNA virus helicase ATP-binding domain; that stretch reads ELVDPPFHEF…HEICTQVFHK (152 aa). 721–728 provides a ligand contact to a ribonucleoside 5'-triphosphate; sequence GVPGSGKS. The region spanning 842–990 is the (+)RNA virus helicase C-terminal domain; sequence SISRRCTKSV…MEEWQAEHDA (149 aa). Residues 1003–1322 enclose the Peptidase C9 domain; the sequence is DVFQNKANVC…STLTNIYTGS (320 aa). The nucleolus localization signal stretch occupies residues 1004–1023; that stretch reads VFQNKANVCWAKALVPVLKT. The active-site For cysteine protease nsP2 activity is Cys-1012. A Nuclear export signal motif is present at residues 1056–1065; sequence VRFFGLDLDS. His-1081 (for cysteine protease nsP2 activity) is an active-site residue. The Nuclear localization signal motif lies at 1179-1183; the sequence is SGKTV. One can recognise a Macro domain in the interval 1328–1489; the sequence is GCAPSYHVVR…TLKEVVARRE (162 aa). The ADP-D-ribose site is built by Asp-1339, Asn-1353, Gly-1361, Gly-1441, Ile-1442, and Phe-1443. The Zn(2+) site is built by Cys-1596, Cys-1598, Cys-1621, and Cys-1639. Disordered regions lie at residues 1774–1806 and 1827–1865; these read IPRP…SVDS and APRT…NPPG. Positions 1856-1877 are binding to host FXR family members; it reads RSSLASNPPGVNRVITREEFEA. The RdRp catalytic domain occupies 2254–2369; that stretch reads DWVLETDIAS…KGVKSDKLMA (116 aa).

As to quaternary structure, interacts with non-structural protein 3. Interacts with RNA-directed RNA polymerase nsP4. Interacts with protease nsP2. interacts with itself. In terms of assembly, interacts with mRNA-capping enzyme nsP1. Interacts with host DDX1. Interacts with host DDX3. Interacts (via C-terminus) with host FXR1; this interaction inhibits the formation of host stress granules on viral mRNAs and the nsp3-FXR1 complexes bind viral RNAs and probably orchestrate the assembly of viral replication complexes. Interacts (via C-terminus) with host FXR2; this interaction inhibits the formation of host stress granules on viral mRNAs and the nsp3-FXR2 complexes bind viral RNAs and probably orchestrate the assembly of viral replication complexes. Interacts (via C-terminus) with host FMR1; this interaction inhibits the formation of host stress granules on viral mRNAs and the nsp3-FMR1 complexes bind viral RNAs and probably orchestrate the assembly of viral replication complexes. Interacts with mRNA-capping enzyme nsP1. Interacts with protease nsP2. interacts with itself. As to quaternary structure, interacts with RNA-directed RNA polymerase nsP4. Interacts with mRNA-capping enzyme nsP1. Interacts with KPNA1/karyopherin-alpha1; this interaction probably allows the active transport of protease nsP2 into the host nucleus. Mg(2+) serves as cofactor. It depends on Mn(2+) as a cofactor. In terms of processing, specific enzymatic cleavages in vivo yield mature proteins. The processing of the polyprotein is temporally regulated. In early stages (1.7 hpi), P1234 is first cleaved in trans through its nsP2 protease activity, releasing P123' and nsP4, which associate to form the early replication complex. At the same time, P1234 is also cut at the nsP1/nsP2 site early in infection but with lower efficiency. After replication of the viral minus-strand RNAs (4 hpi), the polyproteins are cut at the nsP1/nsP2 and nsP2/nsP3 sites very efficiently, preventing accumulation of P123' and P1234 and allowing the formation of the late replication complex. NsP3'/nsP4 site is not cleaved anymore and P34 is produced rather than nsP4. Specific enzymatic cleavages in vivo yield mature proteins. The processing of the polyprotein is temporally regulated. In early stages (1.7 hpi), P123 is cleaved at the nsP1/nsP2 site with low efficiency. After replication of the viral minus-strand RNAs (4 hpi), the polyproteins are cut at the nsP1/nsP2 and nsP2/nsP3 sites very efficiently, preventing accumulation of P123 and allowing the formation of the late replication complex. Post-translationally, specific enzymatic cleavages in vivo yield mature proteins. The processing of the polyprotein is temporally regulated. In early stages (1.7 hpi), P123' is cleaved at the nsP1/nsP2 site with low efficiency. After replication of the viral minus-strand RNAs (4 hpi), the polyproteins are cut at the nsP1/nsP2 and nsP2/nsP3 sites very efficiently, preventing accumulation of P123' and allowing the formation of the late replication complex. In terms of processing, palmitoylated by host palmitoyltransferases ZDHHC2 and ZDHHC19. Phosphorylated by host on serines and threonines. Post-translationally, ubiquitinated; targets the protein for rapid degradation via the ubiquitin system. Nsp4 is present in extremely low quantities due to low frequency of translation through the amber stop-codon and the degradation by the ubiquitin pathway.

It localises to the host cytoplasmic vesicle membrane. The protein localises to the host cell membrane. The protein resides in the host cell projection. Its subcellular location is the host filopodium. It is found in the host nucleus. It localises to the host cytoplasm. The enzyme catalyses GTP + S-adenosyl-L-methionine = N(7)-methyl-GTP + S-adenosyl-L-homocysteine. It carries out the reaction N(7)-methyl-GTP + L-histidyl-[protein] = N(tele)-(N(7)-methylguanosine 5'-phospho)-L-histidyl-[protein] + diphosphate. It catalyses the reaction N(tele)-(N(7)-methylguanosine 5'-phospho)-L-histidyl-[protein] + a 5'-end diphospho-(purine-ribonucleoside) in mRNA + H(+) = a 5'-end (N(7)-methyl 5'-triphosphoguanosine)-(purine-ribonucleoside) in mRNA + L-histidyl-[protein]. The catalysed reaction is a 5'-end triphospho-ribonucleoside in mRNA + H2O = a 5'-end diphospho-ribonucleoside in mRNA + phosphate + H(+). The enzyme catalyses a ribonucleoside 5'-triphosphate + H2O = a ribonucleoside 5'-diphosphate + phosphate + H(+). It carries out the reaction ATP + H2O = ADP + phosphate + H(+). It catalyses the reaction RNA(n) + a ribonucleoside 5'-triphosphate = RNA(n+1) + diphosphate. The catalysed reaction is 4-O-(ADP-D-ribosyl)-L-aspartyl-[protein] + H2O = L-aspartyl-[protein] + ADP-D-ribose + H(+). The enzyme catalyses 5-O-(ADP-D-ribosyl)-L-glutamyl-[protein] + H2O = L-glutamyl-[protein] + ADP-D-ribose + H(+). It carries out the reaction RNA(n) + ATP = RNA(n)-3'-adenine ribonucleotide + diphosphate. It catalyses the reaction ADP-alpha-D-ribose 1''-phosphate + H2O = ADP-D-ribose + phosphate. With respect to regulation, inhibited by sinefungin. Inactive precursor of the viral replicase, which is activated by cleavages carried out by the viral protease nsP2. Its function is as follows. The early replication complex formed by the polyprotein P123 and nsP4 synthesizes the minus-strand RNAs (antigenome). Polyprotein P123 is a short-lived polyprotein that accumulates during early stage of infection. As soon P123 is cleaved into mature proteins, the plus-strand RNAs synthesis begins. Functionally, the early replication complex formed by the polyprotein P123' and nsP4 synthesizes minus-strand RNAs (antigenome). Polyprotein P123' is a short-lived polyprotein that accumulates during early stage of infection. As soon P123' is cleaved into mature proteins, the plus-strand RNAs synthesis begins. In terms of biological role, cytoplasmic capping enzyme that catalyzes two virus-specific reactions: methyltransferase and nsP1 guanylyltransferase. mRNA-capping is necessary since all viral RNAs are synthesized in the cytoplasm, and host capping enzymes are restricted to the nucleus. The enzymatic reaction involves a covalent link between 7-methyl-GMP and nsP1, whereas eukaryotic capping enzymes form a covalent complex only with GMP. NsP1 capping consists in the following reactions: GTP is first methylated into 7-methyl-GMP and then is covalently linked to nsP1 to form the m7GMp-nsP1 complex from which 7-methyl-GMP complex is transferred to the mRNA to create the cap structure. NsP1 is also needed for the initiation of the minus-strand RNAs synthesis. Probably serves as a membrane anchor for the replication complex composed of nsP1-nsP4. Nsp1 is needed for the initiation of the minus-strand RNAs synthesis. Palmitoylated nsP1 is remodeling host cell cytoskeleton, and induces filopodium-like structure formation at the surface of the host cell. Multifunctional protein whose N-terminus is part of the RNA polymerase complex and displays NTPase, RNA triphosphatase and helicase activities. NTPase and RNA triphosphatase are involved in viral RNA capping and helicase keeps a check on the dsRNA replication intermediates. The C-terminus harbors a protease that specifically cleaves the polyproteins and releases the mature proteins. Required for the shutoff of minus-strand RNAs synthesis. Inhibits host translation to ensure maximal viral gene expression and evade host immune response. Its function is as follows. Seems to be essential for minus-strand RNAs and subgenomic 26S mRNAs synthesis. Displays mono-ADP-ribosylhydrolase activity. ADP-ribosylation is a post-translational modification that controls various processes of the host cell and the virus probably needs to revert it for optimal viral replication. Binds proteins of FXR family and sequesters them into the viral RNA replication complexes thereby inhibiting the formation of host stress granules on viral mRNAs. The nsp3-FXR complexes bind viral RNAs and probably orchestrate the assembly of viral replication complexes, thanks to the ability of FXR family members to self-assemble and bind DNA. Functionally, seems to be essential for minus-strand RNAs and subgenomic 26S mRNAs synthesis. Displays mono-ADP-ribosylhydrolase activity. ADP-ribosylation is a post-translational modification that controls various processes of the host cell and the virus probably needs to revert it for optimal viral replication. Binds proteins of FXR family and sequesters them into the viral RNA replication complexes thereby inhibiting the formation of host stress granules on viral mRNAs. The nsp3'-FXR complexes bind viral RNAs and probably orchestrate the assembly of viral replication complexes, thanks to the ability of FXR family members to self-assemble and bind DNA. In terms of biological role, RNA dependent RNA polymerase. Replicates genomic and antigenomic RNA by recognizing replications specific signals. The early replication complex formed by the polyprotein P123 and nsP4 synthesizes minus-strand RNAs. The late replication complex composed of fully processed nsP1-nsP4 is responsible for the production of genomic and subgenomic plus-strand RNAs. This Venezuelan equine encephalitis virus (VEEV) protein is Polyprotein P1234.